The following is a 334-amino-acid chain: Holliday junction branch migration complex subunit RuvB (334 aa).

Positions 1 to 182 (MNERMVDQSM…FGVHLRLEYY (182 aa)) are large ATPase domain (RuvB-L). ATP-binding positions include L21, R22, G63, K66, T67, T68, 129 to 131 (EDF), R172, Y182, and R219. Mg(2+) is bound at residue T67. Positions 183–253 (NESDLKEIII…TTKHALGLLQ (71 aa)) are small ATPAse domain (RuvB-S). Residues 256 to 334 (QHGLDYIDHK…HFAKSNEERE (79 aa)) are head domain (RuvB-H). R292, R311, and R316 together coordinate DNA.

It belongs to the RuvB family. In terms of assembly, homohexamer. Forms an RuvA(8)-RuvB(12)-Holliday junction (HJ) complex. HJ DNA is sandwiched between 2 RuvA tetramers; dsDNA enters through RuvA and exits via RuvB. An RuvB hexamer assembles on each DNA strand where it exits the tetramer. Each RuvB hexamer is contacted by two RuvA subunits (via domain III) on 2 adjacent RuvB subunits; this complex drives branch migration. In the full resolvosome a probable DNA-RuvA(4)-RuvB(12)-RuvC(2) complex forms which resolves the HJ.

The protein resides in the cytoplasm. It catalyses the reaction ATP + H2O = ADP + phosphate + H(+). Its function is as follows. The RuvA-RuvB-RuvC complex processes Holliday junction (HJ) DNA during genetic recombination and DNA repair, while the RuvA-RuvB complex plays an important role in the rescue of blocked DNA replication forks via replication fork reversal (RFR). RuvA specifically binds to HJ cruciform DNA, conferring on it an open structure. The RuvB hexamer acts as an ATP-dependent pump, pulling dsDNA into and through the RuvAB complex. RuvB forms 2 homohexamers on either side of HJ DNA bound by 1 or 2 RuvA tetramers; 4 subunits per hexamer contact DNA at a time. Coordinated motions by a converter formed by DNA-disengaged RuvB subunits stimulates ATP hydrolysis and nucleotide exchange. Immobilization of the converter enables RuvB to convert the ATP-contained energy into a lever motion, pulling 2 nucleotides of DNA out of the RuvA tetramer per ATP hydrolyzed, thus driving DNA branch migration. The RuvB motors rotate together with the DNA substrate, which together with the progressing nucleotide cycle form the mechanistic basis for DNA recombination by continuous HJ branch migration. Branch migration allows RuvC to scan DNA until it finds its consensus sequence, where it cleaves and resolves cruciform DNA. This is Holliday junction branch migration complex subunit RuvB from Staphylococcus aureus (strain bovine RF122 / ET3-1).